Reading from the N-terminus, the 194-residue chain is Phosphoheptose isomerase (194 aa).

The region spanning 37–194 is the SIS domain; that stretch reads IAKSFKNKNK…IIEKEMKKIN (158 aa). Residue 52–54 coordinates substrate; it reads NGG. Residues H61 and E65 each contribute to the Zn(2+) site. Substrate is bound by residues E65, 93–94, 119–121, S124, and Q172; these read ND and STS. Zn(2+)-binding residues include Q172 and H180.

It belongs to the SIS family. GmhA subfamily. As to quaternary structure, homotetramer. The cofactor is Zn(2+).

Its subcellular location is the cytoplasm. The enzyme catalyses 2 D-sedoheptulose 7-phosphate = D-glycero-alpha-D-manno-heptose 7-phosphate + D-glycero-beta-D-manno-heptose 7-phosphate. The protein operates within carbohydrate biosynthesis; D-glycero-D-manno-heptose 7-phosphate biosynthesis; D-glycero-alpha-D-manno-heptose 7-phosphate and D-glycero-beta-D-manno-heptose 7-phosphate from sedoheptulose 7-phosphate: step 1/1. Catalyzes the isomerization of sedoheptulose 7-phosphate in D-glycero-D-manno-heptose 7-phosphate. The polypeptide is Phosphoheptose isomerase (Buchnera aphidicola subsp. Schizaphis graminum (strain Sg)).